The following is a 331-amino-acid chain: ABSCISIC ACID-INSENSITIVE 5-like protein 1 (331 aa).

Residues S40 and S98 each carry the phosphoserine modification. T143 carries the post-translational modification Phosphothreonine. Positions 247 to 310 (MERRQRRMIK…RQEIISRSKQ (64 aa)) constitute a bZIP domain. Residues 249-268 (RRQRRMIKNRESAARSRARR) are basic motif. Residues 275–289 (LELELNNLTEENTKL) form a leucine-zipper region. The span at 296-320 (NEKKRRQEIISRSKQVTKEKSGDKL) shows a compositional bias: basic and acidic residues. The segment at 296–331 (NEKKRRQEIISRSKQVTKEKSGDKLRKIRRMASAGW) is disordered.

Belongs to the bZIP family. ABI5 subfamily. DNA-binding heterodimer with AREB3/DPBF3 or EEL/DPBF4. Interacts with the AFP proteins AFP1, AFP2 and AFP3. Predominantly expressed in seeds.

Its subcellular location is the nucleus. Functionally, could participate in abscisic acid-regulated gene expression during seed development. This is ABSCISIC ACID-INSENSITIVE 5-like protein 1 (DPBF2) from Arabidopsis thaliana (Mouse-ear cress).